A 546-amino-acid polypeptide reads, in one-letter code: Cytochrome P450 monooxygenase fumoB (546 aa).

Residues 13–33 (LGYYEKLAGILGIIGLVLLFW) form a helical membrane-spanning segment. Asparagine 147 carries N-linked (GlcNAc...) asparagine glycosylation. Residue cysteine 488 participates in heme binding.

It belongs to the cytochrome P450 family. Requires heme as cofactor.

It localises to the membrane. It functions in the pathway secondary metabolite biosynthesis. In terms of biological role, cytochrome P450 monooxygenase; part of the gene cluster that mediates the biosynthesis of fumosorinone, a 2-pyridone alkaloid that acts as an inhibitor of protein tyrosine phosphatase 1B which is implicated asa negative regulator of insulin receptor signaling and a potential drug target for the treatment of type II diabetes and other associated metabolic syndromes. The polyketide-amino acid backbone of fumosorinone is first assembled by the PKS-NRPS hybrid fumoS. The PKS modules condense one acetyl-CoA starter unit with 7 malonyl-CoA units, programmed C-methylations occurring after the first 3 and the sixth extensions, and cycles of full reduction occurring after the first 2 extensions. Because fumoS lacks a designated enoyl reductase (ER) domain, the required activity is provided the enoyl reductase fumoC. Upon formation of the polyketide backbone on the thiotemplate, the polyketide is transferred to the NRPS module and linked to tyrosine to produce the acyltetramic acid intermediate called prefumosorinone A. The cytochrome P450 monooxygenase fumoA then probably catalyzes an unprecedented oxidative ring expansion of prefumosorinone A to form prefumosorinone B which contains the 2-pyridone core of fumosorinone. The cytochrome P450 monooxygenase fumoB might hydroxylate the nitrogen of prefumosorinone B, but not the acyltetramic acid prefumosorinone A, to form fumosorinone. In Cordyceps fumosorosea (strain ARSEF 2679) (Isaria fumosorosea), this protein is Cytochrome P450 monooxygenase fumoB.